The sequence spans 257 residues: uncharacterized protein (257 aa).

This is an uncharacterized protein from Bacillus subtilis (strain 168).